Reading from the N-terminus, the 293-residue chain is Acetylglutamate kinase (293 aa).

Substrate-binding positions include 68 to 69 (GG), arginine 90, and asparagine 189.

The protein belongs to the acetylglutamate kinase family. ArgB subfamily.

The protein resides in the cytoplasm. It catalyses the reaction N-acetyl-L-glutamate + ATP = N-acetyl-L-glutamyl 5-phosphate + ADP. It participates in amino-acid biosynthesis; L-arginine biosynthesis; N(2)-acetyl-L-ornithine from L-glutamate: step 2/4. In terms of biological role, catalyzes the ATP-dependent phosphorylation of N-acetyl-L-glutamate. In Mycobacterium ulcerans (strain Agy99), this protein is Acetylglutamate kinase.